The chain runs to 160 residues: Cytochrome b6-f complex subunit 4 (160 aa).

The next 3 membrane-spanning stretches (helical) occupy residues 36–56, 95–115, and 131–151; these read LLYMFPVVIFGSFACVIGLAV, LLGVLLMAAVPAGLLTVPFIE, and TVFLIGTFAAIWLGIGACLPI.

It belongs to the cytochrome b family. PetD subfamily. The 4 large subunits of the cytochrome b6-f complex are cytochrome b6, subunit IV (17 kDa polypeptide, petD), cytochrome f and the Rieske protein, while the 4 small subunits are petG, petL, petM and petN. The complex functions as a dimer.

Its subcellular location is the plastid. It is found in the chloroplast thylakoid membrane. Component of the cytochrome b6-f complex, which mediates electron transfer between photosystem II (PSII) and photosystem I (PSI), cyclic electron flow around PSI, and state transitions. In Tupiella akineta (Green alga), this protein is Cytochrome b6-f complex subunit 4.